The following is a 137-amino-acid chain: Glutaredoxin-C9 (137 aa).

Positions 32–136 (GERVRMVVEE…PILKEVGALW (105 aa)) constitute a Glutaredoxin domain. Cysteines 52 and 55 form a disulfide. The Responsive for interaction with TGA factors signature appears at 134–137 (ALWL).

This sequence belongs to the glutaredoxin family. CC-type subfamily. As to quaternary structure, interacts with TGA2 and TGA6.

It is found in the cytoplasm. The protein localises to the nucleus. Its function is as follows. Has a glutathione-disulfide oxidoreductase activity in the presence of NADPH and glutathione reductase. Reduces low molecular weight disulfides and proteins. In Arabidopsis thaliana (Mouse-ear cress), this protein is Glutaredoxin-C9 (GRXC9).